Reading from the N-terminus, the 297-residue chain is Formylmethanofuran--tetrahydromethanopterin formyltransferase (297 aa).

Belongs to the FTR family. In terms of assembly, homotetramer.

It is found in the cytoplasm. The catalysed reaction is N-formylmethanofuran + 5,6,7,8-tetrahydromethanopterin + H(+) = N(5)-formyl-5,6,7,8-tetrahydromethanopterin + methanofuran. Its pathway is one-carbon metabolism; methanogenesis from CO(2); 5,10-methenyl-5,6,7,8-tetrahydromethanopterin from CO(2): step 2/3. Functionally, catalyzes the reversible transfer of a formyl group from formylmethanofuran (formyl-MFR) to tetrahydromethanopterin (H(4)MPT) to produce 5-formyl tetrahydromethanopterin (5-formyl-H(4)MPT) and methanofuran (MFR). This is Formylmethanofuran--tetrahydromethanopterin formyltransferase from Methanococcoides burtonii (strain DSM 6242 / NBRC 107633 / OCM 468 / ACE-M).